Consider the following 101-residue polypeptide: Protein S100-A7-like 2 (101 aa).

2 consecutive EF-hand domains span residues 13–48 and 50–85; these read IVAM…SGCE and SDMD…ITID. Ca(2+) contacts are provided by aspartate 63, asparagine 65, aspartate 67, lysine 69, and glutamate 74. Zn(2+)-binding residues include histidine 87 and histidine 91.

It belongs to the S-100 family.

This is Protein S100-A7-like 2 (S100A7L2) from Homo sapiens (Human).